Here is an 875-residue protein sequence, read N- to C-terminus: Transcription factor tenR (875 aa).

The zn(2)-C6 fungal-type DNA-binding region spans 16 to 44 (CSECRRRKIRCDRGFPCGPCRKSLPALSC). Disordered regions lie at residues 54–73 (AASA…PKVN), 136–172 (DHEK…GVNP), and 620–642 (PHED…TGSR). Polar residues-rich tracts occupy residues 153 to 168 (PGST…SHSA) and 627 to 642 (SIQS…TGSR).

Its subcellular location is the nucleus. Transcription factor that positively regulates the expression of the genes that mediate the biosynthesis of tenellin-type 2-pyridones, iron-chelating compounds involved in iron stress tolerance, competition with the natural competitor fungus Metarhizium robertsii and insect hosts infection. This Beauveria bassiana (strain ARSEF 2860) (White muscardine disease fungus) protein is Transcription factor tenR.